An 89-amino-acid polypeptide reads, in one-letter code: Small ribosomal subunit protein uS15 (89 aa).

It belongs to the universal ribosomal protein uS15 family. Part of the 30S ribosomal subunit. Forms a bridge to the 50S subunit in the 70S ribosome, contacting the 23S rRNA.

In terms of biological role, one of the primary rRNA binding proteins, it binds directly to 16S rRNA where it helps nucleate assembly of the platform of the 30S subunit by binding and bridging several RNA helices of the 16S rRNA. Functionally, forms an intersubunit bridge (bridge B4) with the 23S rRNA of the 50S subunit in the ribosome. This is Small ribosomal subunit protein uS15 from Oenococcus oeni (strain ATCC BAA-331 / PSU-1).